Here is a 264-residue protein sequence, read N- to C-terminus: Type III pantothenate kinase (264 aa).

6–13 (DSGNSRLK) provides a ligand contact to ATP. Residues Y92 and 99–102 (GADR) each bind substrate. The Proton acceptor role is filled by D101. T127 contributes to the ATP binding site. Residue T177 coordinates substrate.

It belongs to the type III pantothenate kinase family. As to quaternary structure, homodimer. NH4(+) is required as a cofactor. K(+) serves as cofactor.

It localises to the cytoplasm. It catalyses the reaction (R)-pantothenate + ATP = (R)-4'-phosphopantothenate + ADP + H(+). Its pathway is cofactor biosynthesis; coenzyme A biosynthesis; CoA from (R)-pantothenate: step 1/5. Its function is as follows. Catalyzes the phosphorylation of pantothenate (Pan), the first step in CoA biosynthesis. The chain is Type III pantothenate kinase from Bordetella petrii (strain ATCC BAA-461 / DSM 12804 / CCUG 43448).